Reading from the N-terminus, the 671-residue chain is K(+)-insensitive pyrophosphate-energized proton pump (671 aa).

5 helical membrane passes run Ser3–Ala23, Thr57–Leu77, Ile79–Ser99, Ala128–Leu148, and Val156–Phe176. Lys178 lines the substrate pocket. Asp181, Asp185, Asn208, and Asp211 together coordinate Mg(2+). 6 consecutive transmembrane segments (helical) span residues Leu223 to Gly243, Ile249 to Phe269, Gly285 to Met305, Leu310 to Tyr330, Leu366 to Ala386, and Ile391 to Val411. Asp421 serves as a coordination point for Mg(2+). The next 4 membrane-spanning stretches (helical) occupy residues Ala452–Asp472, Val490–Met510, Met558–Pro578, and Ala580–Asp600. Asp607, Asp633, and Asp637 together coordinate Ca(2+). Residue Lys640 participates in substrate binding. Residues Ala646–Ile666 form a helical membrane-spanning segment.

This sequence belongs to the H(+)-translocating pyrophosphatase (TC 3.A.10) family. K(+)-insensitive subfamily. Homodimer. Mg(2+) is required as a cofactor.

The protein resides in the cell membrane. The catalysed reaction is diphosphate + H2O + H(+)(in) = 2 phosphate + 2 H(+)(out). Functionally, proton pump that utilizes the energy of pyrophosphate hydrolysis as the driving force for proton movement across the membrane. Generates a proton motive force. The sequence is that of K(+)-insensitive pyrophosphate-energized proton pump from Methanosarcina acetivorans (strain ATCC 35395 / DSM 2834 / JCM 12185 / C2A).